Here is a 422-residue protein sequence, read N- to C-terminus: Imidazolonepropionase (422 aa).

His82 and His84 together coordinate Fe(3+). Zn(2+)-binding residues include His82 and His84. The 4-imidazolone-5-propanoate site is built by Arg91, Tyr154, and His187. N-formimidoyl-L-glutamate is bound at residue Tyr154. Residue His252 participates in Fe(3+) binding. Residue His252 coordinates Zn(2+). Glu255 contributes to the 4-imidazolone-5-propanoate binding site. Position 327 (Asp327) interacts with Fe(3+). A Zn(2+)-binding site is contributed by Asp327. N-formimidoyl-L-glutamate-binding residues include Asn329 and Gly331. Ser332 is a 4-imidazolone-5-propanoate binding site.

It belongs to the metallo-dependent hydrolases superfamily. HutI family. The cofactor is Zn(2+). Fe(3+) serves as cofactor.

It localises to the cytoplasm. It catalyses the reaction 4-imidazolone-5-propanoate + H2O = N-formimidoyl-L-glutamate. Its pathway is amino-acid degradation; L-histidine degradation into L-glutamate; N-formimidoyl-L-glutamate from L-histidine: step 3/3. Functionally, catalyzes the hydrolytic cleavage of the carbon-nitrogen bond in imidazolone-5-propanoate to yield N-formimidoyl-L-glutamate. It is the third step in the universal histidine degradation pathway. The polypeptide is Imidazolonepropionase (Alkaliphilus metalliredigens (strain QYMF)).